The chain runs to 337 residues: Glycine N(alpha)-acyltransferase (337 aa).

It belongs to the acetyltransferase family.

The catalysed reaction is a (3R)-hydroxyacyl-[ACP] + glycine = a lyso-glycine lipid + holo-[ACP] + H(+). The enzyme catalyses (3R)-hydroxyhexadecanoyl-[ACP] + glycine = N-[(3R)-3-hydroxyhexadecanoyl]-glycine + holo-[ACP] + H(+). It participates in lipid metabolism. In terms of biological role, is involved in the production of glycine lipids (GL), which are phosphorus-free membrane lipids important for fitness during growth of the human gut bacterium B.thetaiotaomicron in vivo and in vitro. Catalyzes the first step of GL biosynthesis, i.e. the N-acylation of glycine via addition of a 3-hydroxy fatty acyl group, to form a range of monoacylated glycine (also named lyso-glycine lipids or lyso-GL). Is important for the ability of B.thetaiotaomicron to adapt to stress and colonize the mammalian gut. Also seems to be required for the production of flavolipin, an acylated serine-glycine dipeptide. The polypeptide is Glycine N(alpha)-acyltransferase (Bacteroides thetaiotaomicron (strain ATCC 29148 / DSM 2079 / JCM 5827 / CCUG 10774 / NCTC 10582 / VPI-5482 / E50)).